Consider the following 113-residue polypeptide: Flagellar hook-basal body complex protein FliE (113 aa).

It belongs to the FliE family.

The protein resides in the bacterial flagellum basal body. In Rhizobium etli (strain CIAT 652), this protein is Flagellar hook-basal body complex protein FliE.